The chain runs to 468 residues: DNA polymerase IV 1 (468 aa).

Residues 6–188 enclose the UmuC domain; sequence VLHLDMDAFF…LPVRRLWGIG (183 aa). Mg(2+) contacts are provided by Asp-10 and Asp-105. The active site involves Glu-106.

The protein belongs to the DNA polymerase type-Y family. As to quaternary structure, monomer. Mg(2+) serves as cofactor.

It localises to the cytoplasm. It carries out the reaction DNA(n) + a 2'-deoxyribonucleoside 5'-triphosphate = DNA(n+1) + diphosphate. In terms of biological role, poorly processive, error-prone DNA polymerase involved in untargeted mutagenesis. Copies undamaged DNA at stalled replication forks, which arise in vivo from mismatched or misaligned primer ends. These misaligned primers can be extended by PolIV. Exhibits no 3'-5' exonuclease (proofreading) activity. May be involved in translesional synthesis, in conjunction with the beta clamp from PolIII. The sequence is that of DNA polymerase IV 1 (dinB1) from Mycobacterium tuberculosis (strain CDC 1551 / Oshkosh).